A 1033-amino-acid polypeptide reads, in one-letter code: MKKVDVKESAVGRETRIRKQWNEQSIFEQSIQNREGAQSFVFYEGPPTANGLPHVGHALGRTIKDVVARYKTMAGYKVLRKAGWDTHGLPVELGVEKQLGISGKHEIEEYGIEPFTKKCKESVFTYEKQWREFTESIGYWVDMDDPYVTLENPYIESVWHILGTIHEKGLLYKGHRVSPYCPSCQTSLSSHEVAQGYKTVKDLSATVKFKVKDSENEYFLGWTTTPWTLPANVALAVHPNMEYVKAKQEGHVYIVAKERVQDVLKENYEVLSVHKGEELLNTSYTAPFPMKEVTNGYRVIGADFVTADSGTGLVHIAPAYGEDDYRVVQSEGLSFLHVVDEKGEYTEVVPFLKGKFVKDCDVDIVRYLAKEGLLYHKEKYEHSYPHCWRCDSPLLYYAGESWLIRTTAIKDTFLQNNDTVTWYPDHMKHGRFGKFLENMVDWNISRNRYWGTPLNVWECESCDHQFAPKSIADLRKHSTKETPEDLELHKPYVDEVQVSCEKCGSAMNRTPEVIDVWFDSGSMPFAQYHYPFENKELFEEQFPADVIAEGIDQTRGWFYSLLAVSALYTGKVPYKRVLSLGHVLDEEGQKMSKSKGNALDPVDLVGKFGADALRWALLVDSAPWNAKRFSERTVLEAKSKFVDTLVNVYSFYVLYANLDEYNPNETYDVKRTKLDEWVLSRLHSTTKKVRTALDDYQFTNAAREIAALVDEVSNWYVRRSRNRFWESGMNAEKAAAYETLHDVLVTISKLIAPFTPFVAEDIHLNLTGSSVHLEDYPVVNESLLQPKLEAEMDAVLQVVELGRSNRNQHSLKVKQPLAELVLLEHNENDMDWESYRDIVMDELNVKAFHVELDETKYTSYQLKLNFKKAGPKFGKNVNAVNGWLKQLSQDEVQNFVSTERAVYEAASGEEVVVTTEDVLVEKVAKSGFSNTTNGQYTVMLDTNVTEELLQEGVAREFIRAVQEYRKQLNLPVNLRVDVILDTEEELQQTLTNHKELLEENLLVKQFTFGHLTNEDDELSLGETKVRIKLSAAQ.

The 'HIGH' region motif lies at 47-57 (PTANGLPHVGH). Positions 590 to 594 (KMSKS) match the 'KMSKS' region motif. ATP is bound at residue K593.

This sequence belongs to the class-I aminoacyl-tRNA synthetase family. IleS type 2 subfamily. Monomer. The cofactor is Zn(2+).

It localises to the cytoplasm. The enzyme catalyses tRNA(Ile) + L-isoleucine + ATP = L-isoleucyl-tRNA(Ile) + AMP + diphosphate. Catalyzes the attachment of isoleucine to tRNA(Ile). As IleRS can inadvertently accommodate and process structurally similar amino acids such as valine, to avoid such errors it has two additional distinct tRNA(Ile)-dependent editing activities. One activity is designated as 'pretransfer' editing and involves the hydrolysis of activated Val-AMP. The other activity is designated 'posttransfer' editing and involves deacylation of mischarged Val-tRNA(Ile). The chain is Isoleucine--tRNA ligase 2 from Bacillus thuringiensis subsp. konkukian (strain 97-27).